The primary structure comprises 270 residues: Formamidopyrimidine-DNA glycosylase (270 aa).

The active-site Schiff-base intermediate with DNA is the Pro2. The active-site Proton donor is Glu3. The active-site Proton donor; for beta-elimination activity is the Lys58. His91, Arg110, and Arg151 together coordinate DNA. The FPG-type zinc finger occupies 236–270; sequence FAYGRAGEFCKVCGTTLREVKLGQRASVYCPRCQR. The active-site Proton donor; for delta-elimination activity is the Arg260.

It belongs to the FPG family. In terms of assembly, monomer. It depends on Zn(2+) as a cofactor.

The enzyme catalyses Hydrolysis of DNA containing ring-opened 7-methylguanine residues, releasing 2,6-diamino-4-hydroxy-5-(N-methyl)formamidopyrimidine.. It carries out the reaction 2'-deoxyribonucleotide-(2'-deoxyribose 5'-phosphate)-2'-deoxyribonucleotide-DNA = a 3'-end 2'-deoxyribonucleotide-(2,3-dehydro-2,3-deoxyribose 5'-phosphate)-DNA + a 5'-end 5'-phospho-2'-deoxyribonucleoside-DNA + H(+). Its function is as follows. Involved in base excision repair of DNA damaged by oxidation or by mutagenic agents. Acts as a DNA glycosylase that recognizes and removes damaged bases. Has a preference for oxidized purines, such as 7,8-dihydro-8-oxoguanine (8-oxoG). Has AP (apurinic/apyrimidinic) lyase activity and introduces nicks in the DNA strand. Cleaves the DNA backbone by beta-delta elimination to generate a single-strand break at the site of the removed base with both 3'- and 5'-phosphates. The protein is Formamidopyrimidine-DNA glycosylase of Ectopseudomonas mendocina (strain ymp) (Pseudomonas mendocina).